The chain runs to 667 residues: E3 ubiquitin-protein ligase Midline-1 (667 aa).

The RING-type zinc-finger motif lies at 10 to 60; sequence CPICLELLEDPLLLPCAHSLCFNCAHRILVSHCATNEPVESINAFQCPTCR. Ser92 and Ser96 each carry phosphoserine. 2 consecutive B box-type zinc fingers follow at residues 116–165 and 172–212; these read KVLC…IEPI and GLMC…VAAL. 12 residues coordinate Zn(2+): Cys119, Cys122, Cys134, Cys137, Cys142, Cys145, His150, His159, Cys175, His178, Cys198, and His204. A coiled-coil region spans residues 205–264; sequence RDHQVAALSERYDKLKQNLESNLTNLIKRNTELETLLAKLIQTCQHVEVNASRQEAKLTE. In terms of domain architecture, COS spans 320-379; it reads LKENDHARFLQTAKNITERVSMATASSQVLIPEINLNDTFDTFALDFSREKKLLECLDYL. The Fibronectin type-III domain maps to 381-484; it reads APNPPTIREE…EPGKLKTNSQ (104 aa). Positions 471–485 are enriched in polar residues; it reads SRSSEPGKLKTNSQP. Residues 471-524 are disordered; that stretch reads SRSSEPGKLKTNSQPFKLDPKSAHRKLKVSHDNLTVERDESSSKKSHTPERFTS. Residues 482–659 form the B30.2/SPRY domain; sequence NSQPFKLDPK…IITGLPIPDH (178 aa). A compositionally biased stretch (basic and acidic residues) spans 499–520; it reads VSHDNLTVERDESSSKKSHTPE. The residue at position 511 (Ser511) is a Phosphoserine.

Belongs to the TRIM/RBCC family. As to quaternary structure, homodimer or heterodimer with MID2. Interacts with IGBP1.

The protein resides in the cytoplasm. The protein localises to the cytoskeleton. The catalysed reaction is S-ubiquitinyl-[E2 ubiquitin-conjugating enzyme]-L-cysteine + [acceptor protein]-L-lysine = [E2 ubiquitin-conjugating enzyme]-L-cysteine + N(6)-ubiquitinyl-[acceptor protein]-L-lysine.. In terms of biological role, has E3 ubiquitin ligase activity towards IGBP1, promoting its monoubiquitination, which results in deprotection of the catalytic subunit of protein phosphatase PP2A, and its subsequent degradation by polyubiquitination. The polypeptide is E3 ubiquitin-protein ligase Midline-1 (Mid1) (Mus spretus (Western Mediterranean mouse)).